Here is a 454-residue protein sequence, read N- to C-terminus: Transmembrane protein adipocyte-associated 1 homolog (454 aa).

Residues asparagine 26 and asparagine 44 are each glycosylated (N-linked (GlcNAc...) asparagine). Helical transmembrane passes span 80–100, 113–133, 151–171, 180–200, and 224–244; these read AILI…TSVI, AFTL…VYSM, IIIK…GLLF, ILIA…VQVI, and FVFW…IMCL. The N-linked (GlcNAc...) asparagine glycan is linked to asparagine 258. A run of 2 helical transmembrane segments spans residues 262–282 and 290–310; these read FIYC…AALI and LCFV…IIYF. N-linked (GlcNAc...) asparagine glycans are attached at residues asparagine 322 and asparagine 323. Positions 408–454 are disordered; sequence RTGSDDFAHHRDSMLSEPSTGTTTRHLKGLGPQGSLVFEEDPSSLRL. Basic and acidic residues predominate over residues 410–421; it reads GSDDFAHHRDSM. Over residues 445 to 454 the composition is skewed to acidic residues; it reads FEEDPSSLRL.

This sequence belongs to the UPF0359 family.

The protein resides in the membrane. The polypeptide is Transmembrane protein adipocyte-associated 1 homolog (tpra-1) (Caenorhabditis briggsae).